Consider the following 194-residue polypeptide: Calcium channel flower (194 aa).

3 helical membrane-spanning segments follow: residues 35–55 (LGIV…FSII), 66–88 (IIQM…VCFE), and 113–133 (AIPP…GLIF).

Belongs to the calcium channel flower family. In terms of assembly, homomultimer. Associates with the dally/ magu complex.

Its subcellular location is the cytoplasmic vesicle. It is found in the secretory vesicle. The protein resides in the synaptic vesicle membrane. It localises to the presynaptic cell membrane. The protein localises to the endosome. Channel activity is inhibited by La(3+), which reduces Ca(2+) influx and thus inhibits it's function in promoting activity-dependent bulk endocytosis (ADBE) in response to high stimuli. Transmembrane protein which mediates synaptic endocytosis, fitness-based cell culling, neuronal culling, morphogen gradient scaling, and calcium transport. Regulates synaptic endocytosis and hence couples exo- with endocytosis. Controls two major modes of synaptic vesicle (SV) endocytosis in the synaptic boutons of neuromuscular junctions (NMJs); Ca(2+) channel-independent Clathrin-mediated endocytosis (CME) in response to mild stimulation, and Ca(2+) channel-dependent activity-dependent bulk endocytosis (ADBE) in response to strong stimulation. Functions in ADBE and subsequent SV reformation from bulk endosomes by initiating Ca(2+) channel-dependent phosphatidylinositol 4,5-bisphosphate (PtdIns(4,5)P2) compartmentalization in synaptic boutons. There it acts at the periactive zone to provide the low Ca(2+) levels required to initiate Calcineurin activation and upregulate PtdIns(4,5)P2. Conversely PtdIns(4,5)P2 enhances fwe Ca(2+) channel-activity, establishing a positive feedback loop that induces PtdIns(4,5)P2 microdomain at the periactive zone. These microdomains trigger bulk membrane invagination (i.e. ADBE) by triggering actin polymerization while also promoting localization of fwe to bulk endosomes, thereby removing the ADBE trigger to reduce endocytosis and prevent excess membrane uptake. PtdIns(4,5)P2 then promotes SV reformation from the bulk endosomes, to coordinate ADBE and subsequent SV reformation. Different combinations of the flower isoforms at the cell membrane are also required for the identification and elimination of suboptimal or supernumerary cells during development, regeneration, and adulthood. Required for the recognition and elimination of unfit cells in the developing wing during cell competition. In the developing pupal retina, mediates the elimination of unwanted postmitotic neurons, including supernumerary photoreceptor neurons that form at the periphery of the retina and are contained within incomplete ommatidia units. Also required for efficient elimination and replacement of old neurons by newly generated neurons during regeneration in the adult brain following mechanical injury. Downstream of the flower fitness fingerprints, cells identified as unwanted or unfit are eliminated via apoptosis through the expression of ahuizotl (azot). However, the cells marked for elimination by the flower isoforms only undergo apoptosis if additional thresholds are met; (1) their neighboring fit/healthy cells express different levels of the fwe isoforms, and (2) the levels of the protective signal SPARC expressed by the loser or unwanted cells are unable to inhibit caspase activation. These additional thresholds for flower-mediated apoptosis, allows useful cells to recover from transient and limited stress before they are unnecessarily eliminated. Functions with dally and magu in a mechanism of scaling, which utilises apoptosis to ensure that the dpp morphogen gradient, which mediates organ growth, remains proportional to the size of the growing wing. In this mechanism, fwe represses dally- and Magu-dependent activity in expanding the gradient, and dally/Magu inhibits fwe-dependent apoptosis to keep cell death rate low. When the levels of these different proteins are optimally regulated the gradient correctly scales with organ growth but when this fails, fwe-mediated apoptosis is activated to trim the developing tissue to match the correct size of the gradient. This chain is Calcium channel flower, found in Drosophila yakuba (Fruit fly).